We begin with the raw amino-acid sequence, 413 residues long: Protein MANNAN SYNTHESIS-RELATED (413 aa).

The Cytoplasmic segment spans residues 1–5 (MNSME). A helical; Signal-anchor for type II membrane protein transmembrane segment spans residues 6-26 (IRQAFAGLLTLSMFIMLGNMI). The Lumenal portion of the chain corresponds to 27–413 (KKDHFDYPAE…KNHLAYKCFC (387 aa)). N207 is a glycosylation site (N-linked (GlcNAc...) asparagine). 255 to 257 (DLR) is a substrate binding site.

It belongs to the glycosyltransferase GT106 family. As to expression, highly and specifically expressed in the endosperm.

It localises to the golgi apparatus membrane. It participates in glycan biosynthesis. Its function is as follows. Glycosyltransferase involved in mannan biosynthesis. This is Protein MANNAN SYNTHESIS-RELATED from Trigonella foenum-graecum (Fenugreek).